Reading from the N-terminus, the 318-residue chain is Protein IMPACT-A (318 aa).

Positions 14–116 constitute an RWD domain; the sequence is DEVEALTSIY…EKIREFLLGK (103 aa). Positions 296-318 are disordered; it reads EESSKQTAKSKKVGKECKKKADH. A compositionally biased stretch (basic and acidic residues) spans 308-318; sequence VGKECKKKADH.

It belongs to the IMPACT family. As to quaternary structure, interacts with GCN1; prevents the interaction of GCN1 with EIF2AK4/GCN2 and inhibits EIF2AK4/GCN2 kinase activity. Interaction with RPL39; this interaction occurs in a GCN1-independent manner. Associates with ribosomes; this interaction occurs in a GCN1-independent manner. Associates with actin; this interaction occurs in a GCN1-independent manner.

It localises to the cytoplasm. In terms of biological role, translational regulator that ensures constant high levels of translation upon a variety of stress conditions, such as amino acid starvation, UV-C irradiation, proteasome inhibitor treatment and glucose deprivation. Plays a role as a negative regulator of the EIF2AK4/GCN2 kinase activity; impairs GCN1-mediated EIF2AK4/GCN2 activation, and hence EIF2AK4/GCN2-mediated eIF-2-alpha phosphorylation and subsequent down-regulation of protein synthesis. Plays a role in differentiation of neuronal cells by stimulating neurite outgrowth. This chain is Protein IMPACT-A (impact-A), found in Xenopus tropicalis (Western clawed frog).